A 198-amino-acid chain; its full sequence is MSAFVTCGATVPFPALVEAVLAPEFVGCLSREGYRVLCVQFGRGYDFEAQFTSVTCTRMPLESAEVSELRQLVRDERVTVMGYKVQDVVVLGFAYSNNILQIIDRYGDVVISHAGTGSILDSLRLNKKLIVVVNHTLMDNHQKQIAEKFQNLGHILATNPTAIELCDAMKRLKHEDLIPLSSETNTEFMERLKSIAYS.

This sequence belongs to the glycosyltransferase 28 family. As to quaternary structure, heterodimer with ALG14 to form a functional enzyme.

The protein localises to the endoplasmic reticulum. It catalyses the reaction an N-acetyl-alpha-D-glucosaminyl-diphospho-di-trans,poly-cis-dolichol + UDP-N-acetyl-alpha-D-glucosamine = an N,N'-diacetylchitobiosyl-diphospho-di-trans,poly-cis-dolichol + UDP + H(+). Its function is as follows. Involved in protein N-glycosylation. Essential for the second step of the dolichol-linked oligosaccharide pathway. The polypeptide is UDP-N-acetylglucosamine transferase subunit ALG13 (ALG13) (Candida glabrata (strain ATCC 2001 / BCRC 20586 / JCM 3761 / NBRC 0622 / NRRL Y-65 / CBS 138) (Yeast)).